The primary structure comprises 504 residues: 26S proteasome non-ATPase regulatory subunit 5 (504 aa).

Ala-2 is subject to N-acetylalanine.

It belongs to the proteasome subunit S5B/HSM3 family. Interacts with PSMC1, PSMC2, PSMD1 and PSMD6. Part of transient complex containing PSMD5, PSMC2, PSMC1 and PSMD2 formed during the assembly of the 26S proteasome.

In terms of biological role, acts as a chaperone during the assembly of the 26S proteasome, specifically of the base subcomplex of the PA700/19S regulatory complex (RC). In the initial step of the base subcomplex assembly is part of an intermediate PSMD5:PSMC2:PSMC1:PSMD2 module which probably assembles with a PSMD10:PSMC4:PSMC5:PAAF1 module followed by dissociation of PSMD5. This Homo sapiens (Human) protein is 26S proteasome non-ATPase regulatory subunit 5 (PSMD5).